The chain runs to 381 residues: Protein COS1 (381 aa).

At methionine 1 to glutamate 42 the chain is on the cytoplasmic side. Residues isoleucine 43–tryptophan 63 traverse the membrane as a helical segment. The Extracellular portion of the chain corresponds to lysine 64–proline 72. Residues leucine 73 to leucine 93 traverse the membrane as a helical segment. The Cytoplasmic portion of the chain corresponds to serine 94–lysine 231. The helical transmembrane segment at arginine 232–serine 252 threads the bilayer. Residues arginine 253–glycine 254 are Extracellular-facing. A helical transmembrane segment spans residues methionine 255–phenylalanine 275. The Cytoplasmic segment spans residues glutamine 276–alanine 381.

The protein belongs to the DUP/COS family.

The protein resides in the membrane. This is Protein COS1 (COS1) from Saccharomyces cerevisiae (strain ATCC 204508 / S288c) (Baker's yeast).